The primary structure comprises 1119 residues: Solute carrier family 38 member 10 (1119 aa).

Transmembrane regions (helical) follow at residues 4–24 (AAASNWGLITNIVNSIVGVSV), 36–58 (IVLGALLLVFCSWMTHQSCMFLV), 84–104 (LVETSMIGLMLGTCIAFYVVI), 120–140 (VGGTFRMFLLFAVSLCIVLPL), 153–173 (FSAMALLFYTVFMFVIVLSSL), 229–249 (IFASSLNVVTTFYVMVGFFGY), 272–292 (MLRVGFMMSVAVGFPMMILPC), 323–343 (ALTLSVVFGTMVGGILIPNVE), 345–365 (ILGLTGATMGSLICFICPALI), and 378–398 (VVLWVGLGVLVVSTVTTLSVS). Disordered stretches follow at residues 438-691 (AEDG…EEAG) and 731-1071 (KEIH…DGVI). 5 stretches are compositionally biased toward basic and acidic residues: residues 439–454 (EDGREKPKLPKEREEL), 466–475 (PGREDGKEAP), 493–522 (EAHRHEPPVPHDKVVVDEGQDREVPEENKP), 544–559 (DSEREKQEPEQGEVGK), and 592–603 (AKEDLGPGDRGL). Position 612 is a phosphoserine (serine 612). Residues 652-667 (PPLPAEKPAPGPGLPP) show a composition bias toward pro residues. Composition is skewed to basic and acidic residues over residues 668–677 (EPREQRDVER), 731–752 (KEIHQQRQEDEEDKPRQVEVHQ), and 763–773 (EAPEGKARETV). Threonine 772 is modified (phosphothreonine). The residue at position 802 (serine 802) is a Phosphoserine. 2 stretches are compositionally biased toward basic and acidic residues: residues 832–841 (KLRDGQKDAA) and 863–876 (PAREAGGPEERLAE). Residues 880-889 (GQSQDVTGGS) show a composition bias toward polar residues. Residues serine 889, serine 965, and serine 997 each carry the phosphoserine modification. Composition is skewed to basic and acidic residues over residues 975-1005 (HRLDHGGHLEMRKARGGDHVPVSHEQPRGGE), 1012-1022 (PRQRPEPELGL), and 1033-1042 (DNAKPNRDLK).

This sequence belongs to the amino acid/polyamine transporter 2 family.

It localises to the membrane. It catalyses the reaction L-glutamate(out) = L-glutamate(in). The catalysed reaction is L-glutamine(out) = L-glutamine(in). It carries out the reaction L-alanine(in) = L-alanine(out). The enzyme catalyses L-serine(in) = L-serine(out). It catalyses the reaction L-leucine(in) = L-leucine(out). In terms of biological role, facilitates bidirectional transport of amino acids. May act as a glutamate sensor that regulates glutamate-glutamine cycle and mTOR signaling in the brain. The transport mechanism remains to be elucidated. The chain is Solute carrier family 38 member 10 from Homo sapiens (Human).